The chain runs to 283 residues: Pantothenate synthetase (283 aa).

34-41 (MGALHEGH) contacts ATP. Catalysis depends on His-41, which acts as the Proton donor. (R)-pantoate is bound at residue Gln-65. Beta-alanine is bound at residue Gln-65. 152–155 (GQKD) contacts ATP. Residue Gln-158 participates in (R)-pantoate binding. ATP contacts are provided by residues Val-181 and 189–192 (MSSR).

It belongs to the pantothenate synthetase family. Homodimer.

The protein localises to the cytoplasm. It catalyses the reaction (R)-pantoate + beta-alanine + ATP = (R)-pantothenate + AMP + diphosphate + H(+). It functions in the pathway cofactor biosynthesis; (R)-pantothenate biosynthesis; (R)-pantothenate from (R)-pantoate and beta-alanine: step 1/1. In terms of biological role, catalyzes the condensation of pantoate with beta-alanine in an ATP-dependent reaction via a pantoyl-adenylate intermediate. The protein is Pantothenate synthetase of Nitrobacter winogradskyi (strain ATCC 25391 / DSM 10237 / CIP 104748 / NCIMB 11846 / Nb-255).